Consider the following 1211-residue polypeptide: Endoplasmic reticulum transmembrane helix translocase (1211 aa).

The Cytoplasmic portion of the chain corresponds to 1-23 (MGSKALITSPDISSGQLYIKLPT). A helical membrane pass occupies residues 24–44 (FFHLYVWPFALFVYPYIGYVY). Topologically, residues 45-54 (QNKLYSEEVR) are lumenal. A helical membrane pass occupies residues 55 to 75 (YLTYIAVGTIHALFWLAGEWN). At 76–191 (TKVYCLMTCR…FDIPIPTFGT (116 aa)) the chain is on the cytoplasmic side. Residues 155-185 (TIGTLKKSTGLTNIQSEIFLYRYGKNCFDIP) are A-domain; part 1. The chain crosses the membrane as a helical span at residues 192 to 212 (LFKEHAVAPFFVFQIFCCVLW). The Lumenal segment spans residues 213–216 (CLDD). A helical transmembrane segment spans residues 217 to 237 (YWYFSLFSMFMIIALECSVVW). Residues 238 to 397 (QRQRTLTEFR…EKVTANNRES (160 aa)) lie on the Cytoplasmic side of the membrane. The interval 250–388 (SIKPYEIQVY…LVRTMVFSSE (139 aa)) is A-domain; part 2. Residues 398–418 (LYFILFLLVFAIAASGYVWHV) form a helical membrane-spanning segment. Residues 419–1057 (GSKTERSRYK…KERPQAGIFN (639 aa)) are Lumenal-facing. Residues 464-493 (YIYCTEPFRIPLSGHLDICCFDKTGTLTEE) form a P-domain; part 1 region. The active-site 4-aspartylphosphate intermediate is aspartate 485. Aspartate 485 and threonine 487 together coordinate Mg(2+). Residues 485 to 487 (DKT), phenylalanine 587, arginine 644, aspartate 710, and 824 to 828 (DGTND) each bind ATP. An N-domain region spans residues 495–685 (MVVQGIAGVN…FAGFLIFTSP (191 aa)). Positions 688–845 (EDARQTVQML…HVGVALLNAS (158 aa)) are P-domain; part 2. Position 824 (aspartate 824) interacts with Mg(2+). An arm-like region spans residues 846–955 (EEDMLEMQER…NASDDEAPKL (110 aa)). A P-domain; part 3 region spans residues 956–971 (KLGDASVAAPFTSKLA). Residues 1058-1078 (TYIIGSVLGQFAIHIVTLIYI) traverse the membrane as a helical segment. The Cytoplasmic segment spans residues 1079–1100 (TRVVYLYEDPLEKVDLEETFKP). A helical transmembrane segment spans residues 1101-1121 (SLLNTAIYLLQLIQQVSTFAI). Residues 1122–1136 (NYQGRPFREALSENK) are Lumenal-facing. Residues 1137-1157 (GMYYGLLGIAFVAIAGVTEFS) form a helical membrane-spanning segment. The Cytoplasmic portion of the chain corresponds to 1158-1174 (PELNAKLQLVKMAYNFQ). A helical transmembrane segment spans residues 1175–1195 (IQLLATMVVDYAACWIIEELM). The Lumenal portion of the chain corresponds to 1196–1211 (KKYFRDNKPKEIVLRN).

It belongs to the cation transport ATPase (P-type) (TC 3.A.3) family. Type V subfamily. Mg(2+) serves as cofactor.

It is found in the endoplasmic reticulum membrane. It carries out the reaction [protein]-with a C-terminal TM segment(out) + ATP + H2O = [protein]-with a C-terminal TM segment(in) + ADP + phosphate + H(+). Its function is as follows. Endoplasmic reticulum translocase required to remove mitochondrial transmembrane proteins mistargeted to the endoplasmic reticulum. Acts as a dislocase that mediates the ATP-dependent extraction of mislocalized mitochondrial transmembrane proteins from the endoplasmic reticulum membrane. Specifically binds mitochondrial tail-anchored transmembrane proteins: has an atypically large substrate-binding pocket that recognizes and binds moderately hydrophobic transmembranes with short hydrophilic lumenal domains. Involved in controlling nuclear calcium ion levels. Required for cytokinesis and stabilizing microtubules. Required for assembly of the forespore membrane. Involved in calcium transport to the endoplasmic reticulum. This chain is Endoplasmic reticulum transmembrane helix translocase, found in Schizosaccharomyces pombe (strain 972 / ATCC 24843) (Fission yeast).